Consider the following 502-residue polypeptide: MAWALKLPLADEVIESGLVQDFDASLSGIGQELGAGAYSMSDVLALPIFKQEESSLPPDNENKILPFQYVLCAATSPAVKLHDETLTYLNQGQSYEIRMLDNRKLGELPEINGKLVKSIFRVVFHDRRLQYTEHQQLEGWRWNRPGDRILDIDIPMSVGIIDPRANPTQLNTVEFLWDPAKRTSVFIQVHCISTEFTMRKHGGEKGVPFRVQIDTFKENENGEYTEHLHSASCQIKVFKPKGADRKQKTDREKMEKRTPHEKEKYQPSYETTILTECSPWPEITYVNNSPSPGFNSSHSSFSLGEGNGSPNHQPEPPPPVTDNLLPTTTPQEAQQWLHRNRFSTFTRLFTNFSGADLLKLTRDDVIQICGPADGIRLFNALKGRMVRPRLTIYVCQESLQLREQQQQQQQQQQKHEDGDSNGTFFVYHAIYLEELTAVELTEKIAQLFSISPCQISQIYKQGPTGIHVLISDEMIQNFQEEACFILDTMKAETNDSYHIILK.

The 240-residue stretch at Glu-61 to Ser-300 folds into the Grh/CP2 DB domain. The segment at Glu-133–Cys-395 is DNA-binding. Disordered stretches follow at residues Phe-238 to Ser-268 and Phe-294 to Leu-325. Residues Lys-241–Tyr-265 are compositionally biased toward basic and acidic residues. Ser-353 is modified (phosphoserine).

It belongs to the grh/CP2 family. CP2 subfamily. Binds to DNA as a dimer, isoform 3 does not bind to DNA or affect the binding of isoform 1 to DNA. Interacts with UBP1 and PIAS1, and is probably part of a complex containing TFCP2, UBP1 and PIAS1. Component of the SSP (stage selector protein) complex, which appears to be a heteromer of TFCP2 and 2 copies of NFE4. In terms of tissue distribution, ubiquitous. Expressed in brain, ovary, kidney, thymus, spleen, liver, adrenal, heart and lung (at protein level).

It is found in the nucleus. In terms of biological role, binds a variety of cellular and viral promoters including fibrinogen, alpha-globin, SV40 and HIV-1 promoters. Activation of the alpha-globin promoter in erythroid cells is via synergistic interaction with UBP1. Functions as part of the SSP (stage selector protein) complex. Facilitates the interaction of the gamma-globin genes with enhancer elements contained in the locus control region in fetal erythroid cells. Interacts by binding to the stage selector element (SSE) in the proximal gamma-globin promoter. This chain is Alpha-globin transcription factor CP2 (TFCP2), found in Homo sapiens (Human).